The sequence spans 3114 residues: Centromere protein F (3114 aa).

The tract at residues Met-1 to Met-481 is interaction with SNAP25 and required for localization to the cytoplasm. A coiled-coil region spans residues Pro-13 to Ala-131. Ser-106 bears the Phosphoserine mark. 3 positions are modified to phosphothreonine: Thr-144, Thr-151, and Thr-154. Tyr-158 is modified (phosphotyrosine). The segment covering Gln-211 to Thr-235 has biased composition (polar residues). The segment at Gln-211–Pro-236 is disordered. Phosphoserine is present on residues Ser-242 and Ser-276. Residues Leu-280–Val-685 adopt a coiled-coil conformation. Phosphoserine occurs at positions 773, 783, 821, 834, 838, and 876. 2 coiled-coil regions span residues Val-899 to Glu-989 and Leu-1196 to Asp-1244. A phosphoserine mark is found at Ser-1248, Ser-1255, and Ser-1259. A coiled-coil region spans residues Val-1549–Gln-1646. Phosphoserine occurs at positions 1651, 1652, and 1654. Disordered stretches follow at residues Arg-1667 to Val-1690 and Thr-1710 to Ile-1746. The segment covering Glu-1669–Val-1690 has biased composition (basic and acidic residues). Residue Ser-1726 is modified to Phosphoserine. At Thr-1862 the chain carries Phosphothreonine. A phosphoserine mark is found at Ser-1868 and Ser-1892. 2 coiled-coil regions span residues Asn-1890–Arg-2078 and Leu-2107–Gln-2891. The interval Leu-2026–Asn-2351 is interaction with NDE1 and NDEL1. 2 tandem repeats follow at residues Gln-2111–Asp-2290 and Ile-2293–Ser-2472. The 2 X 177 AA tandem repeats stretch occupies residues Gln-2111–Ser-2472. A sufficient for self-association region spans residues Ser-2392 to Gly-2829. A sufficient for centromere localization region spans residues Ser-2392–Ala-3017. Residues Ser-2416 and Ser-2417 each carry the phosphoserine modification. Position 2779 is an N6-acetyllysine (Lys-2779). A sufficient for nuclear localization region spans residues Val-2831 to Ala-3017. The disordered stretch occupies residues Gln-2891–Glu-2977. 4 positions are modified to phosphoserine: Ser-2900, Ser-2911, Ser-2922, and Ser-2936. A Nuclear localization signal motif is present at residues Lys-2919–Ser-2936. Thr-2949 is modified (phosphothreonine). Residues Ser-2952, Ser-2998, Ser-3023, and Ser-3026 each carry the phosphoserine modification. A disordered region spans residues Pro-3024 to Gln-3114. Polar residues predominate over residues Ala-3033–Ser-3045. A phosphoserine mark is found at Ser-3054, Ser-3079, and Ser-3083. The span at Ser-3079 to Arg-3089 shows a compositional bias: basic and acidic residues. The segment covering Ser-3105 to Gln-3114 has biased composition (polar residues). Cysteine methyl ester is present on Cys-3111. A lipid anchor (S-farnesyl cysteine) is attached at Cys-3111. The propeptide at Lys-3112 to Gln-3114 is removed in mature form.

This sequence belongs to the centromere protein F family. As to quaternary structure, interacts with and STX4 (via C-terminus). Interacts (via N-terminus) with RBL1, RBL2 and SNAP25. Self-associates. Interacts with CENP-E and BUBR1 (via C-terminus). Interacts (via C-terminus) with NDE1, NDEL1 and RB1. Post-translationally, hyperphosphorylated during mitosis.

Its subcellular location is the cytoplasm. The protein resides in the perinuclear region. It localises to the nucleus matrix. It is found in the chromosome. The protein localises to the centromere. Its subcellular location is the kinetochore. The protein resides in the cytoskeleton. It localises to the spindle. Functionally, required for kinetochore function and chromosome segregation in mitosis. Required for kinetochore localization of dynein, LIS1, NDE1 and NDEL1. Regulates recycling of the plasma membrane by acting as a link between recycling vesicles and the microtubule network though its association with STX4 and SNAP25. Acts as a potential inhibitor of pocket protein-mediated cellular processes during development by regulating the activity of RB proteins during cell division and proliferation. May play a regulatory or permissive role in the normal embryonic cardiomyocyte cell cycle and in promoting continued mitosis in transformed, abnormally dividing neonatal cardiomyocytes. Interaction with RB directs embryonic stem cells toward a cardiac lineage. Involved in the regulation of DNA synthesis and hence cell cycle progression, via its C-terminus. Has a potential role regulating skeletal myogenesis and in cell differentiation in embryogenesis. Involved in dendritic cell regulation of T-cell immunity against chlamydia. The chain is Centromere protein F (CENPF) from Homo sapiens (Human).